The chain runs to 865 residues: Protein translocase subunit SecA (865 aa).

Residues Gln93, 111–115 (GEGKT), and Asp501 contribute to the ATP site. Zn(2+) is bound by residues Cys841, Cys843, Cys852, and Cys853.

It belongs to the SecA family. Monomer and homodimer. Part of the essential Sec protein translocation apparatus which comprises SecA, SecYEG and auxiliary proteins SecDF-YajC and YidC. The cofactor is Zn(2+).

It is found in the cell inner membrane. The protein localises to the cytoplasm. The enzyme catalyses ATP + H2O + cellular proteinSide 1 = ADP + phosphate + cellular proteinSide 2.. Part of the Sec protein translocase complex. Interacts with the SecYEG preprotein conducting channel. Has a central role in coupling the hydrolysis of ATP to the transfer of proteins into and across the cell membrane, serving as an ATP-driven molecular motor driving the stepwise translocation of polypeptide chains across the membrane. The protein is Protein translocase subunit SecA of Helicobacter acinonychis (strain Sheeba).